We begin with the raw amino-acid sequence, 71 residues long: SRY-related protein LG27 (71 aa).

A DNA-binding region (HMG box) is located at residues 1-68 (VKRPMNAFMV…KHMADYPNYK (68 aa)).

Its subcellular location is the nucleus. The chain is SRY-related protein LG27 from Eublepharis macularius (Leopard gecko).